Here is a 655-residue protein sequence, read N- to C-terminus: Macrolide export ATP-binding/permease protein MacB (655 aa).

An ABC transporter domain is found at 6 to 244 (IELRDVWREF…DALAGDEGPE (239 aa)). Residue 42 to 49 (GASGSGKS) coordinates ATP. A disordered region spans residues 225-252 (DQARPDAPPLDALAGDEGPEAPRPAPQP). A run of 4 helical transmembrane segments spans residues 280 to 300 (LTMLGIIIGIAAVVSVVALGA), 527 to 547 (LTLLVSMIAVISLVVVGIGVM), 583 to 603 (VLVCLIGGVLGILLSLSIGVL), and 620 to 640 (SMVLAFVCSTLIGVAFGFLPA).

This sequence belongs to the ABC transporter superfamily. Macrolide exporter (TC 3.A.1.122) family. As to quaternary structure, homodimer.

The protein localises to the cell inner membrane. Functionally, non-canonical ABC transporter that contains transmembrane domains (TMD), which form a pore in the inner membrane, and an ATP-binding domain (NBD), which is responsible for energy generation. Confers resistance against macrolides. This chain is Macrolide export ATP-binding/permease protein MacB, found in Bordetella avium (strain 197N).